A 375-amino-acid chain; its full sequence is 23S rRNA (uracil(747)-C(5))-methyltransferase RlmC (375 aa).

Cys3, Cys11, Cys14, and Cys87 together coordinate [4Fe-4S] cluster. Gln212, Phe241, Glu262, and Asn307 together coordinate S-adenosyl-L-methionine. Cys334 acts as the Nucleophile in catalysis.

The protein belongs to the class I-like SAM-binding methyltransferase superfamily. RNA M5U methyltransferase family. RlmC subfamily.

The catalysed reaction is uridine(747) in 23S rRNA + S-adenosyl-L-methionine = 5-methyluridine(747) in 23S rRNA + S-adenosyl-L-homocysteine + H(+). Functionally, catalyzes the formation of 5-methyl-uridine at position 747 (m5U747) in 23S rRNA. The chain is 23S rRNA (uracil(747)-C(5))-methyltransferase RlmC from Escherichia coli O6:H1 (strain CFT073 / ATCC 700928 / UPEC).